The following is a 616-amino-acid chain: 2-isopropylmalate synthase (616 aa).

The tract at residues 1–34 (MSPNDAFISAPAKIETPVGPRNEGQPAWNKQRGS) is disordered. The Pyruvate carboxyltransferase domain occupies 67–341 (PQWCAVDLRD…DPQLDFTDIR (275 aa)). Residues Asp-76, His-280, His-282, and Asn-316 each contribute to the Mg(2+) site. Residues 490 to 616 (RTAPVEQIAL…NHEAVLAGGV (127 aa)) are regulatory domain.

This sequence belongs to the alpha-IPM synthase/homocitrate synthase family. LeuA type 2 subfamily. As to quaternary structure, homodimer. Mg(2+) is required as a cofactor.

It localises to the cytoplasm. It catalyses the reaction 3-methyl-2-oxobutanoate + acetyl-CoA + H2O = (2S)-2-isopropylmalate + CoA + H(+). It participates in amino-acid biosynthesis; L-leucine biosynthesis; L-leucine from 3-methyl-2-oxobutanoate: step 1/4. In terms of biological role, catalyzes the condensation of the acetyl group of acetyl-CoA with 3-methyl-2-oxobutanoate (2-ketoisovalerate) to form 3-carboxy-3-hydroxy-4-methylpentanoate (2-isopropylmalate). The protein is 2-isopropylmalate synthase of Corynebacterium glutamicum (strain R).